The primary structure comprises 254 residues: Type III pantothenate kinase (254 aa).

13–20 contributes to the ATP binding site; it reads MIGNTRQH. Substrate contacts are provided by residues Tyr-84 and 88-91; that span reads GLDR. Asp-90 acts as the Proton acceptor in catalysis. Residue Asp-110 participates in K(+) binding. Thr-113 lines the ATP pocket. Thr-166 is a substrate binding site.

Belongs to the type III pantothenate kinase family. Homodimer. NH4(+) is required as a cofactor. The cofactor is K(+).

The protein resides in the cytoplasm. It carries out the reaction (R)-pantothenate + ATP = (R)-4'-phosphopantothenate + ADP + H(+). Its pathway is cofactor biosynthesis; coenzyme A biosynthesis; CoA from (R)-pantothenate: step 1/5. Its function is as follows. Catalyzes the phosphorylation of pantothenate (Pan), the first step in CoA biosynthesis. The protein is Type III pantothenate kinase of Thermosynechococcus vestitus (strain NIES-2133 / IAM M-273 / BP-1).